The chain runs to 142 residues: Hemoglobin subunit alpha-1 (142 aa).

At Ser-1 the chain carries N-acetylserine. The Globin domain occupies 1 to 142; the sequence is SLSVKDKAAV…VALALAERYR (142 aa). An O2-binding site is contributed by His-59. His-88 is a binding site for heme b.

The protein belongs to the globin family. In terms of assembly, hb 1 is a heterotetramer of two alpha-1 and two beta-1 chains. As to expression, red blood cells.

In terms of biological role, involved in oxygen transport from gills to the various peripheral tissues. In Gobionotothen gibberifrons (Humped rockcod), this protein is Hemoglobin subunit alpha-1 (hba1).